Consider the following 536-residue polypeptide: Major facilitator superfamily domain-containing protein 4B (536 aa).

12 consecutive transmembrane segments (helical) span residues 19-39, 53-73, 81-101, 105-125, 140-160, 211-231, 297-317, 341-361, 366-386, 391-411, 428-448, and 456-476; these read LTYW…GPTI, ITWV…SGGA, ALLA…IIPL, VLLL…IDTI, IFLQ…PLIA, YAFW…FVLM, FFLI…IMGV, LNCI…PLSY, VHLL…LMIL, VFLF…FPCL, VLVT…GTLI, and FLVC…SVIL.

This sequence belongs to the major facilitator superfamily.

The protein resides in the membrane. This Danio rerio (Zebrafish) protein is Major facilitator superfamily domain-containing protein 4B.